The sequence spans 165 residues: Phosphopantetheine adenylyltransferase (165 aa).

Residue Ser10 coordinates substrate. ATP is bound by residues 10–11 (SF) and His18. Positions 42, 74, and 88 each coordinate substrate. ATP-binding positions include 89–91 (GLR), Glu99, and 124–130 (YSFISSS).

It belongs to the bacterial CoaD family. In terms of assembly, homohexamer. Requires Mg(2+) as cofactor.

It is found in the cytoplasm. It catalyses the reaction (R)-4'-phosphopantetheine + ATP + H(+) = 3'-dephospho-CoA + diphosphate. It functions in the pathway cofactor biosynthesis; coenzyme A biosynthesis; CoA from (R)-pantothenate: step 4/5. Reversibly transfers an adenylyl group from ATP to 4'-phosphopantetheine, yielding dephospho-CoA (dPCoA) and pyrophosphate. The sequence is that of Phosphopantetheine adenylyltransferase from Macrococcus caseolyticus (strain JCSC5402) (Macrococcoides caseolyticum).